Here is a 480-residue protein sequence, read N- to C-terminus: CASP8 and FADD-like apoptosis regulator (480 aa).

DED domains follow at residues 1 to 73 (MSAE…RILK) and 92 to 170 (DYRV…KIQK). Residues 1 to 195 (MSAEVIHQVE…LQAAIQKSLK (195 aa)) form an interaction with CASP8 region. The interval 1–227 (MSAEVIHQVE…GAQQEPVKKS (227 aa)) is interaction with FADD. The interval 1-305 (MSAEVIHQVE…FACMPEHRDY (305 aa)) is interaction with CASP8 propeptide. Residues 1 to 435 (MSAEVIHQVE…CLSQKLRQER (435 aa)) form a not proteolytically processed and involved in apoptosis inhibition region. An interaction with CASP3 region spans residues 192–435 (KSLKDPSNNF…CLSQKLRQER (244 aa)). Residues 192–480 (KSLKDPSNNF…LRKKLILSYT (289 aa)) are interaction with TRAF1 and TRAF2. The interval 217 to 480 (LGAQQEPVKK…LRKKLILSYT (264 aa)) is interaction with CASP8 subunits p18 and p10. The tract at residues 263–358 (ETELLRDTFT…AGKPKMFFIQ (96 aa)) is caspase. Residues 370-480 (SSLLEVDGPA…LRKKLILSYT (111 aa)) are interaction with CASP8.

Belongs to the peptidase C14A family. TNFRSF6 stimulation triggers recruitment to the death-inducing signaling complex (DISC) formed by TNFRSF6, FADD and CASP8. A proteolytic fragment (p43) stays associated with the DISC. Also interacts with FADD, CASP8, CASP3, TRAF1, TRAF2 and Bcl-X(L) (in vitro). Interacts with RIPK1. In terms of assembly, (Microbial infection) Interacts with HBV protein X. Proteolytically processed by CASP8 generating subunit p43 and p12. As to expression, widely expressed. Higher expression in skeletal muscle, pancreas, heart, kidney, placenta, and peripheral blood leukocytes. Also detected in diverse cell lines. Isoform 8 is predominantly expressed in testis and skeletal muscle.

Apoptosis regulator protein which may function as a crucial link between cell survival and cell death pathways in mammalian cells. Acts as an inhibitor of TNFRSF6 mediated apoptosis. A proteolytic fragment (p43) is likely retained in the death-inducing signaling complex (DISC) thereby blocking further recruitment and processing of caspase-8 at the complex. Full length and shorter isoforms have been shown either to induce apoptosis or to reduce TNFRSF-triggered apoptosis. Lacks enzymatic (caspase) activity. The polypeptide is CASP8 and FADD-like apoptosis regulator (CFLAR) (Homo sapiens (Human)).